The following is a 236-amino-acid chain: Biosynthetic peptidoglycan transglycosylase (236 aa).

Residues 12–31 (ALLWFAAGSALVVLVLRWVP) form a helical membrane-spanning segment.

Belongs to the glycosyltransferase 51 family.

It localises to the cell inner membrane. The enzyme catalyses [GlcNAc-(1-&gt;4)-Mur2Ac(oyl-L-Ala-gamma-D-Glu-L-Lys-D-Ala-D-Ala)](n)-di-trans,octa-cis-undecaprenyl diphosphate + beta-D-GlcNAc-(1-&gt;4)-Mur2Ac(oyl-L-Ala-gamma-D-Glu-L-Lys-D-Ala-D-Ala)-di-trans,octa-cis-undecaprenyl diphosphate = [GlcNAc-(1-&gt;4)-Mur2Ac(oyl-L-Ala-gamma-D-Glu-L-Lys-D-Ala-D-Ala)](n+1)-di-trans,octa-cis-undecaprenyl diphosphate + di-trans,octa-cis-undecaprenyl diphosphate + H(+). Its pathway is cell wall biogenesis; peptidoglycan biosynthesis. Its function is as follows. Peptidoglycan polymerase that catalyzes glycan chain elongation from lipid-linked precursors. The protein is Biosynthetic peptidoglycan transglycosylase of Pseudomonas syringae pv. tomato (strain ATCC BAA-871 / DC3000).